We begin with the raw amino-acid sequence, 238 residues long: Triosephosphate isomerase (238 aa).

A substrate-binding site is contributed by 7 to 9 (NFK). Catalysis depends on histidine 91, which acts as the Electrophile. Catalysis depends on glutamate 158, which acts as the Proton acceptor. The substrate site is built by glycine 164 and serine 200.

Belongs to the triosephosphate isomerase family. In terms of assembly, homodimer.

Its subcellular location is the cytoplasm. It catalyses the reaction D-glyceraldehyde 3-phosphate = dihydroxyacetone phosphate. It participates in carbohydrate biosynthesis; gluconeogenesis. Its pathway is carbohydrate degradation; glycolysis; D-glyceraldehyde 3-phosphate from glycerone phosphate: step 1/1. Involved in the gluconeogenesis. Catalyzes stereospecifically the conversion of dihydroxyacetone phosphate (DHAP) to D-glyceraldehyde-3-phosphate (G3P). The protein is Triosephosphate isomerase of Ureaplasma parvum serovar 3 (strain ATCC 27815 / 27 / NCTC 11736).